An 89-amino-acid chain; its full sequence is Small ribosomal subunit protein uS15 (89 aa).

Belongs to the universal ribosomal protein uS15 family. In terms of assembly, part of the 30S ribosomal subunit. Forms a bridge to the 50S subunit in the 70S ribosome, contacting the 23S rRNA.

In terms of biological role, one of the primary rRNA binding proteins, it binds directly to 16S rRNA where it helps nucleate assembly of the platform of the 30S subunit by binding and bridging several RNA helices of the 16S rRNA. Functionally, forms an intersubunit bridge (bridge B4) with the 23S rRNA of the 50S subunit in the ribosome. The sequence is that of Small ribosomal subunit protein uS15 from Shewanella baltica (strain OS223).